The sequence spans 134 residues: Profilin-3 (134 aa).

Cys-13 and Cys-118 are joined by a disulfide. An Involved in PIP2 interaction motif is present at residues 84–100; the sequence is AVIRGKKGSGGITIKKT. Thr-114 bears the Phosphothreonine mark.

This sequence belongs to the profilin family. As to quaternary structure, occurs in many kinds of cells as a complex with monomeric actin in a 1:1 ratio. In terms of processing, phosphorylated by MAP kinases.

It localises to the cytoplasm. The protein localises to the cytoskeleton. In terms of biological role, binds to actin and affects the structure of the cytoskeleton. At high concentrations, profilin prevents the polymerization of actin, whereas it enhances it at low concentrations. The polypeptide is Profilin-3 (Olea europaea (Common olive)).